Here is a 742-residue protein sequence, read N- to C-terminus: Two pore calcium channel protein 1 (742 aa).

Residues 1 to 44 form a disordered region; the sequence is MSEAQAPLITEEAAERGLASSGSRRLSDGGGGQGSRKYRRRSDA. Residues 1 to 82 lie on the Cytoplasmic side of the membrane; the sequence is MSEAQAPLIT…NDTRFGRAMS (82 aa). Residues 83–103 traverse the membrane as a helical segment; the sequence is FYFVYLRLDWLWSLNIFALIL. Over 104 to 140 the chain is Extracellular; that stretch reads LNFLEKPLWCRKDALHACDQRDMYFLGQLPYFSKTES. A helical transmembrane segment spans residues 141-161; sequence LIYEGLTLVILVMEILCPLSY. Topologically, residues 162–176 are cytoplasmic; that stretch reads EGLNIFWRSTTNKLK. A helical transmembrane segment spans residues 177–197; it reads ILLLFILACDILVFAFSSQPF. Topologically, residues 198–204 are extracellular; the sequence is RLAPYIR. The helical; Voltage-sensor transmembrane segment at 205-226 threads the bilayer; the sequence is VVFLIMTIRELRMCAITLAGLI. Residues 227–247 traverse the membrane as a helical segment; that stretch reads GTYLNVLALSLLFLLFASWLA. At 248 to 258 the chain is on the extracellular side; that stretch reads YVTFEDTPQGK. The segment at residues 259-273 is an intramembrane region (pore-forming); the sequence is TIFSSYGVTLYQMFV. Residues 274–296 lie on the Extracellular side of the membrane; sequence LFTTSNNPDVWVPAYKISRWYSL. The chain crosses the membrane as a helical span at residues 297–317; sequence FFIVYVLLGVYFLTNLILAVI. The Cytoplasmic portion of the chain corresponds to 318 to 446; sequence YDSFKEQFAK…SFVRSRTFEY (129 aa). EF-hand domains lie at 335–370 and 376–411; these read IRKN…LNKY and TSRE…IAIK. A helical transmembrane segment spans residues 447–467; sequence IIVFVLLINLVAVIIETTLDI. The Extracellular portion of the chain corresponds to 468-480; it reads ENSSSQETWQEVE. N-linked (GlcNAc...) asparagine glycosylation is present at Asn-469. Residues 481 to 501 traverse the membrane as a helical segment; that stretch reads FFLGWIYVAEMALKIFSLGFG. The Cytoplasmic segment spans residues 502–510; that stretch reads AYWMEGQNK. Residues 511–531 form a helical membrane-spanning segment; the sequence is FDFVLTWTIFIGETLTFAFPS. Residues 532-540 are Extracellular-facing; sequence KLPFLSNGE. Residues 541–558 traverse the membrane as a helical; Voltage-sensor segment; it reads WIRYLLLGRVLRLTRILL. At 559 to 582 the chain is on the cytoplasmic side; it reads QVQRFRVFVATFFTLMSSLMPYLG. Residues 583 to 603 traverse the membrane as a helical segment; that stretch reads IVFCILCMYCSLGLQIFGGIV. Residues 604–627 are Extracellular-facing; it reads YAGNPTLEETDLFSNDYLLFNFND. The pore-forming intramembrane region spans 628 to 642; it reads YPSGMVTLFNLLVMG. Over 643-663 the chain is Extracellular; sequence NWQVWMESYWQLTGSSWSLIY. Residues 664 to 684 traverse the membrane as a helical segment; that stretch reads FVSFYLISILLLLNLIVAFVL. The Cytoplasmic segment spans residues 685–742; that stretch reads EAFFAEMELEKGEEVDIQSPTSGGIKKRRSMRVRSKGTMVDILLHHMLSNELDGSQNS.

It belongs to the calcium channel alpha-1 subunit (TC 1.A.1.11) family. Two pore calcium channel subfamily. Homodimer.

The protein resides in the membrane. With respect to regulation, inhibited by Al(3+). In terms of biological role, functions as a voltage-gated inward-rectifying Ca(2+) channel (VDCC) across the plasma membrane that mediates sucrose-induced Ca(2+) influx in autotrophically grown leaf cells. Acts as the major ROS-responsive Ca(2+) channel and is the possible target of Al-dependent inhibition. Plays a regulatory role in defense responses. In Hordeum vulgare (Barley), this protein is Two pore calcium channel protein 1 (TPC1).